The sequence spans 683 residues: Translation initiation factor IF-2 (683 aa).

The tr-type G domain maps to Lys182 to Lys351. Positions Gly191–Thr198 are G1. Gly191–Thr198 lines the GTP pocket. A G2 region spans residues Gly216–His220. Residues Asp237–Gly240 are G3. GTP-binding positions include Asp237–His241 and Asn291–Asp294. The tract at residues Asn291 to Asp294 is G4. The G5 stretch occupies residues Ser327–His329.

This sequence belongs to the TRAFAC class translation factor GTPase superfamily. Classic translation factor GTPase family. IF-2 subfamily.

The protein resides in the cytoplasm. Functionally, one of the essential components for the initiation of protein synthesis. Protects formylmethionyl-tRNA from spontaneous hydrolysis and promotes its binding to the 30S ribosomal subunits. Also involved in the hydrolysis of GTP during the formation of the 70S ribosomal complex. This Clostridium novyi (strain NT) protein is Translation initiation factor IF-2.